Reading from the N-terminus, the 240-residue chain is Citrate synthase-lysine N-methyltransferase CSKMT, mitochondrial (240 aa).

The transit peptide at 1-21 (MAALRRMLHLPRLTMGTCRPF) directs the protein to the mitochondrion.

The protein belongs to the methyltransferase superfamily.

Its subcellular location is the mitochondrion. It catalyses the reaction L-lysyl-[citrate synthase] + S-adenosyl-L-methionine = N(6)-methyl-L-lysyl-[citrate synthase] + S-adenosyl-L-homocysteine + H(+). It carries out the reaction N(6)-methyl-L-lysyl-[citrate synthase] + S-adenosyl-L-methionine = N(6),N(6)-dimethyl-L-lysyl-[citrate synthase] + S-adenosyl-L-homocysteine + H(+). The catalysed reaction is N(6),N(6)-dimethyl-L-lysyl-[citrate synthase] + S-adenosyl-L-methionine = N(6),N(6),N(6)-trimethyl-L-lysyl-[citrate synthase] + S-adenosyl-L-homocysteine + H(+). With respect to regulation, citrate synthase-lysine methyltransferase activity is inhibited by S-adenosylhomocysteine (AdoHcy) and oxaloacetate (OAA). Its function is as follows. Protein-lysine methyltransferase that selectively trimethylates citrate synthase (CS) in mitochondria. Seems to conduct trimethylation in a highly distributive manner rather than in a processive manner, and thus introduces a single methyl group per binding event. The protein is Citrate synthase-lysine N-methyltransferase CSKMT, mitochondrial of Pongo abelii (Sumatran orangutan).